Consider the following 538-residue polypeptide: Phosphatidylethanolamine transferase Mcr-2 (538 aa).

5 helical membrane-spanning segments follow: residues 14 to 34, 47 to 67, 72 to 92, 121 to 141, and 161 to 181; these read PFVL…LTFF, LGFI…IVVL, YVLK…SYFT, LAFF…VAVA, and VSLV…ASFF. Zn(2+)-binding residues include glutamate 244 and threonine 283. Disulfide bonds link cysteine 279–cysteine 289, cysteine 354–cysteine 362, and cysteine 412–cysteine 420. Phosphothreonine is present on threonine 283. 2 residues coordinate Zn(2+): aspartate 463 and histidine 464.

This sequence belongs to the phosphoethanolamine transferase family. In terms of assembly, monomer. In terms of processing, phosphorylated at Thr-283; may represent an intermediate in the catalytic mechanism.

The protein resides in the cell inner membrane. The catalysed reaction is lipid A (E. coli) + a 1,2-diacyl-sn-glycero-3-phosphoethanolamine + H(+) = lipid A 4'-(2-aminoethyl diphosphate) (E. coli) + a 1,2-diacyl-sn-glycerol. Its function is as follows. Probably catalyzes the addition of a phosphoethanolamine moiety to lipid A. Phosphoethanolamine modification of lipid A confers polymyxin resistance. Confers resistance to polymyxin-type antibiotics such as colistin. The polypeptide is Phosphatidylethanolamine transferase Mcr-2 (Escherichia coli).